Consider the following 384-residue polypeptide: Putative glutamate--cysteine ligase 2 (384 aa).

It belongs to the glutamate--cysteine ligase type 2 family. YbdK subfamily.

It carries out the reaction L-cysteine + L-glutamate + ATP = gamma-L-glutamyl-L-cysteine + ADP + phosphate + H(+). In terms of biological role, ATP-dependent carboxylate-amine ligase which exhibits weak glutamate--cysteine ligase activity. The chain is Putative glutamate--cysteine ligase 2 from Dechloromonas aromatica (strain RCB).